The following is a 318-amino-acid chain: Ankyrin repeat domain-containing protein 1 (318 aa).

Positions 37–77 (ALEKQEDLKTTSKSLIELEEEKQSKEKQLKSELLKKKLEER) form a coiled coil. 5 ANK repeats span residues 151–180 (YKRTALHRACSEGHTAIVEKLIEAGANIEF), 184–213 (LESTALHWTCRGGSVETLKLLLNKGAAINA), 217–246 (LLSTPLHVAVRTGYYECGEHLIACEADLNA), 250–279 (EGDTPMHDGVRLNRYKMIRLLILYGVNLNI), and 283–314 (AGKTPMELVMQWQNGAKEIFNGLQNKSYKNSH).

It is found in the nucleus. May act as a nuclear transcription factor that negatively regulates the expression of cardiac genes. The polypeptide is Ankyrin repeat domain-containing protein 1 (ankrd1) (Xenopus laevis (African clawed frog)).